The chain runs to 487 residues: Cytochrome P450 2C16 (487 aa).

Cys432 contributes to the heme binding site.

Belongs to the cytochrome P450 family. Heme is required as a cofactor. In terms of tissue distribution, expressed constitutively in liver, lung, testes, and kidney.

The protein resides in the endoplasmic reticulum membrane. It localises to the microsome membrane. It carries out the reaction an organic molecule + reduced [NADPH--hemoprotein reductase] + O2 = an alcohol + oxidized [NADPH--hemoprotein reductase] + H2O + H(+). Its function is as follows. Cytochromes P450 are a group of heme-thiolate monooxygenases. In liver microsomes, this enzyme is involved in an NADPH-dependent electron transport pathway. It oxidizes a variety of structurally unrelated compounds, including steroids, fatty acids, and xenobiotics. This Oryctolagus cuniculus (Rabbit) protein is Cytochrome P450 2C16 (CYP2C16).